The chain runs to 92 residues: Small ribosomal subunit protein uS19c (92 aa).

Belongs to the universal ribosomal protein uS19 family.

It is found in the plastid. Protein S19 forms a complex with S13 that binds strongly to the 16S ribosomal RNA. This chain is Small ribosomal subunit protein uS19c, found in Cuscuta gronovii (Common dodder).